The sequence spans 368 residues: Aspartate-semialdehyde dehydrogenase (368 aa).

NADP(+) contacts are provided by residues 10–13 (RGMV), 37–38 (TS), and glutamine 74. Residue arginine 103 participates in phosphate binding. The Acyl-thioester intermediate role is filled by cysteine 136. Cysteine 136 carries the post-translational modification S-cysteinyl cysteine; in inhibited form. Glutamine 163 is a binding site for substrate. NADP(+) is bound by residues 166–167 (SG) and proline 194. A substrate-binding site is contributed by glutamate 242. Lysine 245 lines the phosphate pocket. Arginine 268 contacts substrate. Histidine 275 serves as the catalytic Proton acceptor. Position 351 (glutamine 351) interacts with NADP(+).

The protein belongs to the aspartate-semialdehyde dehydrogenase family. Homodimer.

The catalysed reaction is L-aspartate 4-semialdehyde + phosphate + NADP(+) = 4-phospho-L-aspartate + NADPH + H(+). The protein operates within amino-acid biosynthesis; L-lysine biosynthesis via DAP pathway; (S)-tetrahydrodipicolinate from L-aspartate: step 2/4. Its pathway is amino-acid biosynthesis; L-methionine biosynthesis via de novo pathway; L-homoserine from L-aspartate: step 2/3. It functions in the pathway amino-acid biosynthesis; L-threonine biosynthesis; L-threonine from L-aspartate: step 2/5. Functionally, catalyzes the NADPH-dependent formation of L-aspartate-semialdehyde (L-ASA) by the reductive dephosphorylation of L-aspartyl-4-phosphate. The polypeptide is Aspartate-semialdehyde dehydrogenase (Salmonella typhi).